Reading from the N-terminus, the 175-residue chain is Pycsar effector protein RsPycTM (175 aa).

3 helical membrane passes run 17 to 37, 44 to 64, and 146 to 166; these read AKNA…ITLL, PLGF…AAII, and AGSL…LFCI.

It localises to the cell inner membrane. In terms of biological role, pycsar (pyrimidine cyclase system for antiphage resistance) provides immunity against bacteriophage. The pyrimidine cyclase (PycC) synthesizes cyclic nucleotides in response to infection; these serve as specific second messenger signals. The signals activate the nearby effector, leading to bacterial cell death and abortive phage infection. A clade A Pycsar system. Its function is as follows. The effector gene of a two-gene Pycsar system. Expression of this and uridylate cyclase RsPycC (AC A0A4R2TZQ0) probably confers resistance to bacteriophage. The genes are probably only expressed in response to bacteriophage infection. Probably only responds to cUMP (produced by its cognate NTP cyclase), acts by impairing membrane integrity. This is Pycsar effector protein RsPycTM from Rhizobium sp. (strain PP-F2F-G36).